We begin with the raw amino-acid sequence, 240 residues long: MGLEVAADSVGSALAAQDGGAIRVELCGGLDGGGLTPSFGTLAVVRERLQIPLYVLIRPRVGDFVFDAAEVEVMRRDVEQCVRLGCDGVVLGALDPQGQVDLPAMRALIEAAGTLGVTFHRAIDVSADPARVLEDAITLGCERVLTSGARASALEGVETIAALVRQAGERISIMPGAGVSAANVQALRAGTGAREFHASARGPVAAQVHAPHPYITDLGGDYQRTDVARVRSIVQLLQTA.

The protein belongs to the CutC family.

Its subcellular location is the cytoplasm. In Xanthomonas campestris pv. campestris (strain 8004), this protein is PF03932 family protein CutC.